Consider the following 298-residue polypeptide: Multifunctional dioxygenase ausE (298 aa).

2 residues coordinate substrate: Arg-72 and Gln-127. Positions 130 and 132 each coordinate Fe cation. Substrate is bound at residue Thr-167. His-214 lines the Fe cation pocket. Arg-226 contributes to the substrate binding site.

This sequence belongs to the PhyH family. Homodimer. Fe cation serves as cofactor.

It carries out the reaction preaustinoid A1 + 2-oxoglutarate + O2 = preaustinoid A2 + succinate + CO2 + H2O. The catalysed reaction is preaustinoid A2 + 2-oxoglutarate + O2 = preaustinoid A3 + succinate + CO2 + H2O. The enzyme catalyses berkeleyone A + 2-oxoglutarate + O2 = preaustinoid A + succinate + CO2 + H2O. It participates in secondary metabolite biosynthesis; terpenoid biosynthesis. Its function is as follows. Multifunctional dioxygenase; part of the gene cluster B that mediates the biosynthesis of austinol and dehydroaustinol, two fungal meroterpenoids. The first step of the pathway is the synthesis of 3,5-dimethylorsellinic acid by the polyketide synthase ausA. 3,5-dimethylorsellinic acid is then prenylated by the polyprenyl transferase ausN. Further epoxidation by the FAD-dependent monooxygenase ausM and cyclization by the probable terpene cyclase ausL lead to the formation of protoaustinoid A. Protoaustinoid A is then oxidized to spiro-lactone preaustinoid A3 by the combined action of the FAD-binding monooxygenases ausB and ausC, and the dioxygenase ausE. Acid-catalyzed keto-rearrangement and ring contraction of the tetraketide portion of preaustinoid A3 by ausJ lead to the formation of preaustinoid A4. The aldo-keto reductase ausK, with the help of ausH, is involved in the next step by transforming preaustinoid A4 into isoaustinone which is in turn hydroxylated by the P450 monooxygenase ausI to form austinolide. Finally, the cytochrome P450 monooxygenase ausG modifies austinolide to austinol. Austinol can be further modified to dehydroaustinol which forms a diffusible complex with diorcinol that initiates conidiation. Due to genetic rearrangements of the clusters and the subsequent loss of some enzymes, the end products of the Emericella nidulans austinoid biosynthesis clusters are austinol and dehydroaustinol, even if additional enzymes, such as the O-acetyltransferase ausQ and the cytochrome P450 monooxygenase ausR are still functional. The chain is Multifunctional dioxygenase ausE from Emericella nidulans (strain FGSC A4 / ATCC 38163 / CBS 112.46 / NRRL 194 / M139) (Aspergillus nidulans).